Consider the following 271-residue polypeptide: MAFKFKTFAAVGALIGSLALAGCGQDEKDPNHIKVGVIVGAEQQVAEVAQKVAKEKYGLDVELVTFNDYVLPNEALSKGDIDANAFQHKPYLDQQIKDRGYKLVSVGKTFVYPIAGYSKKIKSLDELKDGSQVAVPNDPTNLGRSLLLLQKVGLIKLKDGVGLLPTSLDIVENPKNLKIVELEAPQLPRSLDDAQIALAVINTTYASQIGLTPAKDGIFVEDKDSPYVNLIVTREDNKDAENVKKFVQAYQSDEVYEAANKVFNGGAVKGW.

The signal sequence occupies residues 1-22; the sequence is MAFKFKTFAAVGALIGSLALAG. The N-palmitoyl cysteine moiety is linked to residue cysteine 23. Cysteine 23 is lipidated: S-diacylglycerol cysteine.

Belongs to the NlpA lipoprotein family.

Its subcellular location is the cell membrane. In terms of biological role, this protein is a component of a D-methionine permease, a binding protein-dependent, ATP-driven transport system. This Salmonella typhimurium (strain LT2 / SGSC1412 / ATCC 700720) protein is D-methionine-binding lipoprotein MetQ (metQ).